A 185-amino-acid chain; its full sequence is Crossover junction endodeoxyribonuclease RuvC (185 aa).

Catalysis depends on residues aspartate 7, glutamate 66, and aspartate 137. Residues aspartate 7, glutamate 66, and aspartate 137 each contribute to the Mg(2+) site.

This sequence belongs to the RuvC family. In terms of assembly, homodimer which binds Holliday junction (HJ) DNA. The HJ becomes 2-fold symmetrical on binding to RuvC with unstacked arms; it has a different conformation from HJ DNA in complex with RuvA. In the full resolvosome a probable DNA-RuvA(4)-RuvB(12)-RuvC(2) complex forms which resolves the HJ. Requires Mg(2+) as cofactor.

The protein localises to the cytoplasm. The enzyme catalyses Endonucleolytic cleavage at a junction such as a reciprocal single-stranded crossover between two homologous DNA duplexes (Holliday junction).. The RuvA-RuvB-RuvC complex processes Holliday junction (HJ) DNA during genetic recombination and DNA repair. Endonuclease that resolves HJ intermediates. Cleaves cruciform DNA by making single-stranded nicks across the HJ at symmetrical positions within the homologous arms, yielding a 5'-phosphate and a 3'-hydroxyl group; requires a central core of homology in the junction. The consensus cleavage sequence is 5'-(A/T)TT(C/G)-3'. Cleavage occurs on the 3'-side of the TT dinucleotide at the point of strand exchange. HJ branch migration catalyzed by RuvA-RuvB allows RuvC to scan DNA until it finds its consensus sequence, where it cleaves and resolves the cruciform DNA. The chain is Crossover junction endodeoxyribonuclease RuvC from Anaeromyxobacter sp. (strain K).